A 235-amino-acid polypeptide reads, in one-letter code: UPF0502 protein Bmul_3231/BMULJ_05293 (235 aa).

Belongs to the UPF0502 family.

The polypeptide is UPF0502 protein Bmul_3231/BMULJ_05293 (Burkholderia multivorans (strain ATCC 17616 / 249)).